Here is a 356-residue protein sequence, read N- to C-terminus: tRNA pseudouridine synthase D (356 aa).

Aspartate 84 serves as the catalytic Nucleophile. Residues 159 to 302 (GVPNYYGPQR…RRGARRPIRV (144 aa)) form the TRUD domain.

It belongs to the pseudouridine synthase TruD family.

It carries out the reaction uridine(13) in tRNA = pseudouridine(13) in tRNA. Its function is as follows. Responsible for synthesis of pseudouridine from uracil-13 in transfer RNAs. The polypeptide is tRNA pseudouridine synthase D (Thermus thermophilus (strain ATCC 27634 / DSM 579 / HB8)).